The primary structure comprises 143 residues: Large ribosomal subunit protein uL11 (143 aa).

It belongs to the universal ribosomal protein uL11 family. In terms of assembly, part of the ribosomal stalk of the 50S ribosomal subunit. Interacts with L10 and the large rRNA to form the base of the stalk. L10 forms an elongated spine to which L12 dimers bind in a sequential fashion forming a multimeric L10(L12)X complex. In terms of processing, one or more lysine residues are methylated.

In terms of biological role, forms part of the ribosomal stalk which helps the ribosome interact with GTP-bound translation factors. This Paraburkholderia phymatum (strain DSM 17167 / CIP 108236 / LMG 21445 / STM815) (Burkholderia phymatum) protein is Large ribosomal subunit protein uL11.